A 185-amino-acid chain; its full sequence is Crossover junction endodeoxyribonuclease RuvC (185 aa).

Catalysis depends on residues Asp-7, Glu-68, and Asp-141. Mg(2+) is bound by residues Asp-7, Glu-68, and Asp-141.

It belongs to the RuvC family. In terms of assembly, homodimer which binds Holliday junction (HJ) DNA. The HJ becomes 2-fold symmetrical on binding to RuvC with unstacked arms; it has a different conformation from HJ DNA in complex with RuvA. In the full resolvosome a probable DNA-RuvA(4)-RuvB(12)-RuvC(2) complex forms which resolves the HJ. Mg(2+) is required as a cofactor.

The protein resides in the cytoplasm. The catalysed reaction is Endonucleolytic cleavage at a junction such as a reciprocal single-stranded crossover between two homologous DNA duplexes (Holliday junction).. In terms of biological role, the RuvA-RuvB-RuvC complex processes Holliday junction (HJ) DNA during genetic recombination and DNA repair. Endonuclease that resolves HJ intermediates. Cleaves cruciform DNA by making single-stranded nicks across the HJ at symmetrical positions within the homologous arms, yielding a 5'-phosphate and a 3'-hydroxyl group; requires a central core of homology in the junction. The consensus cleavage sequence is 5'-(A/T)TT(C/G)-3'. Cleavage occurs on the 3'-side of the TT dinucleotide at the point of strand exchange. HJ branch migration catalyzed by RuvA-RuvB allows RuvC to scan DNA until it finds its consensus sequence, where it cleaves and resolves the cruciform DNA. The protein is Crossover junction endodeoxyribonuclease RuvC of Helicobacter hepaticus (strain ATCC 51449 / 3B1).